The sequence spans 321 residues: Probable pectate lyase A (321 aa).

The N-terminal stretch at 1–20 (MANFKLFLALAACLSGQALA) is a signal peptide. Residue asparagine 93 is glycosylated (N-linked (GlcNAc...) asparagine). Ca(2+)-binding residues include aspartate 134, aspartate 163, and aspartate 167. Arginine 220 is a catalytic residue.

The protein belongs to the polysaccharide lyase 1 family. Requires Ca(2+) as cofactor.

The protein resides in the secreted. It catalyses the reaction Eliminative cleavage of (1-&gt;4)-alpha-D-galacturonan to give oligosaccharides with 4-deoxy-alpha-D-galact-4-enuronosyl groups at their non-reducing ends.. In terms of biological role, pectinolytic enzyme consist of four classes of enzymes: pectin lyase, polygalacturonase, pectin methylesterase and rhamnogalacturonase. Among pectinolytic enzymes, pectin lyase is the most important in depolymerization of pectin, since it cleaves internal glycosidic bonds of highly methylated pectins. Favors pectate, the anion, over pectin, the methyl ester. This is Probable pectate lyase A (plyA) from Aspergillus flavus (strain ATCC 200026 / FGSC A1120 / IAM 13836 / NRRL 3357 / JCM 12722 / SRRC 167).